A 56-amino-acid chain; its full sequence is MAKEKATLPPTGAGLMRFFDEDTRAVKVSPKGVIALTLLLIAFEFILHMFGSSIFG.

The Cytoplasmic segment spans residues 1–29; sequence MAKEKATLPPTGAGLMRFFDEDTRAVKVS. The chain crosses the membrane as a helical span at residues 30–49; sequence PKGVIALTLLLIAFEFILHM. Residues 50–56 lie on the Extracellular side of the membrane; the sequence is FGSSIFG.

This sequence belongs to the SEC61-beta family. Component of the protein translocase complex. Heterotrimer consisting of alpha (SecY), beta (SecG) and gamma (SecE) subunits. Can form oligomers of the heterotrimer.

It is found in the cell membrane. Involved in protein export. The function of the beta subunit is unknown, but it may be involved in stabilization of the trimeric complex. In Thermococcus kodakarensis (strain ATCC BAA-918 / JCM 12380 / KOD1) (Pyrococcus kodakaraensis (strain KOD1)), this protein is Preprotein translocase subunit SecG.